The primary structure comprises 307 residues: CRISPR-associated endonuclease Cas1 2 (307 aa).

Mn(2+) contacts are provided by Glu-142, His-206, and Glu-221.

This sequence belongs to the CRISPR-associated endonuclease Cas1 family. Homodimer, forms a heterotetramer with a Cas2 homodimer. Forms oligomers, probably binds nucleic acids as a homodimer. Requires Mg(2+) as cofactor. The cofactor is Mn(2+).

Functionally, CRISPR (clustered regularly interspaced short palindromic repeat), is an adaptive immune system that provides protection against mobile genetic elements (viruses, transposable elements and conjugative plasmids). CRISPR clusters contain spacers, sequences complementary to antecedent mobile elements, and target invading nucleic acids. CRISPR clusters are transcribed and processed into CRISPR RNA (crRNA). Acts as a dsDNA endonuclease. Involved in the integration of spacer DNA into the CRISPR cassette. In terms of biological role, in vitro catalyzes a concerted transesterification reaction on branched DNA, as would be expected during integration of protospacers into the CRISPR leader sequence; Cas2 is not required in vitro. This reaction requires a 3'-OH group at the branch point. Binds ss- and dsDNA and ss- and dsRNA with approximately equal affinity. May be able to anneal complementary DNA strands. This is CRISPR-associated endonuclease Cas1 2 from Saccharolobus solfataricus (strain ATCC 35092 / DSM 1617 / JCM 11322 / P2) (Sulfolobus solfataricus).